The chain runs to 347 residues: 4-hydroxy-3-methylbut-2-en-1-yl diphosphate synthase (flavodoxin) (347 aa).

Cysteine 259, cysteine 262, cysteine 294, and glutamate 301 together coordinate [4Fe-4S] cluster.

The protein belongs to the IspG family. [4Fe-4S] cluster is required as a cofactor.

It catalyses the reaction (2E)-4-hydroxy-3-methylbut-2-enyl diphosphate + oxidized [flavodoxin] + H2O + 2 H(+) = 2-C-methyl-D-erythritol 2,4-cyclic diphosphate + reduced [flavodoxin]. Its pathway is isoprenoid biosynthesis; isopentenyl diphosphate biosynthesis via DXP pathway; isopentenyl diphosphate from 1-deoxy-D-xylulose 5-phosphate: step 5/6. Its function is as follows. Converts 2C-methyl-D-erythritol 2,4-cyclodiphosphate (ME-2,4cPP) into 1-hydroxy-2-methyl-2-(E)-butenyl 4-diphosphate. The sequence is that of 4-hydroxy-3-methylbut-2-en-1-yl diphosphate synthase (flavodoxin) from Caldicellulosiruptor saccharolyticus (strain ATCC 43494 / DSM 8903 / Tp8T 6331).